A 456-amino-acid polypeptide reads, in one-letter code: Tyrosine phenol-lyase (456 aa).

The residue at position 257 (lysine 257) is an N6-(pyridoxal phosphate)lysine.

It belongs to the beta-eliminating lyase family. Homotetramer. Pyridoxal 5'-phosphate is required as a cofactor. In terms of processing, contains L-DOPA (3',4'-dihydroxyphenylalanine).

The protein resides in the cytoplasm. The catalysed reaction is L-tyrosine + H2O = phenol + pyruvate + NH4(+). This Enterobacter agglomerans (Erwinia herbicola) protein is Tyrosine phenol-lyase (tpl).